The chain runs to 230 residues: Antiholin-like protein LrgB (230 aa).

The next 7 helical transmembrane spans lie at 5-25 (MTPYFGIVVSLIAYGIGTLLF), 30-50 (GFFLFTPLFVAMVLGIVFLKV), 61-81 (GGKMISFFLEPATIAFAIPLY), 92-112 (WQILSAIVVGSICSVIVVFIV), 149-169 (ITSFAVIFNAVIVYALGALFL), 177-197 (PIAKGLALGTAGHALGVAVGI), and 209-229 (IAVTVVGVVTVVVIPMFMPFI).

The protein belongs to the CidB/LrgB family. LrgB subfamily.

The protein localises to the cell membrane. Its function is as follows. Inhibits the expression or activity of extracellular murein hydrolases by interacting, possibly with LrgA, with the holin-like protein CidA. The LrgAB and CidA proteins may affect the proton motive force of the membrane. May be involved in programmed cell death (PCD), possibly triggering PCD in response to antibiotics and environmental stresses. The polypeptide is Antiholin-like protein LrgB (Bacillus cereus (strain Q1)).